Reading from the N-terminus, the 1557-residue chain is Target of rapamycin complex 1 subunit KOG1 (1557 aa).

HEAT repeat units lie at residues 548–586, 588–625, 777–814, and 888–925; these read RHPP…WAVY, SLSI…IDYK, CMNT…GFQD, and RQEI…RYSN. The span at 1084–1098 shows a compositional bias: low complexity; that stretch reads SESNSDSDTQSSNTS. Positions 1084-1114 are disordered; the sequence is SESNSDSDTQSSNTSMKSHTSKKGPSGLYLL. WD repeat units follow at residues 1207-1248, 1252-1293, 1296-1346, 1350-1390, 1400-1440, 1452-1492, and 1517-1557; these read NNKS…SKFS, PFGT…DTFK, SAWR…VEVD, KTSS…RDSM, KQGV…PVES, SQQK…NSFK, and TSDA…IDYF.

It belongs to the WD repeat RAPTOR family. The target of rapamycin complex 1 (TORC1) is composed of at least KOG1, LST8, TCO89 and either TOR1 (TORC1-A) or TOR2 (TORC1-B). Interacts with PIB2; following activation of PIB2 by glutamine or cysteine. TORC1 binds to and is inhibited by FKBP-rapamycin.

The protein resides in the cell membrane. It localises to the vacuole membrane. Component of TORC1, which regulates multiple cellular processes to control cell growth in response to environmental signals. Nutrient limitation and environmental stress signals cause inactivation of TORC1. Active TORC1 positively controls ribosome biogenesis via control of rRNA, ribosomal protein and tRNA gene expression, and rRNA processing. TORC1 positively controls protein biosynthesis by regulation of mRNA stability, translation initiation factor activity, and high-affinity amino acid permeases that serve to provide amino acids for use by the translation machinery. TORC1 also promotes growth by sequestering a number of nutrient and general stress-responsive transcription factors in the cytoplasm. TORC1 negatively controls macroautophagy, a process to recycle surplus cytoplasmic mass under nutrient starvation conditions. KOG1 may have a role in binding and recruiting substrates of TORC1. The protein is Target of rapamycin complex 1 subunit KOG1 (KOG1) of Saccharomyces cerevisiae (strain ATCC 204508 / S288c) (Baker's yeast).